We begin with the raw amino-acid sequence, 122 residues long: uncharacterized protein (122 aa).

The N-terminal stretch at 1–22 (MNMMRIFYIGLSGVGMMFSSMA) is a signal peptide.

This is an uncharacterized protein from Escherichia coli (strain K12).